The sequence spans 55 residues: Large ribosomal subunit protein bL33C (55 aa).

It belongs to the bacterial ribosomal protein bL33 family.

In Kineococcus radiotolerans (strain ATCC BAA-149 / DSM 14245 / SRS30216), this protein is Large ribosomal subunit protein bL33C.